A 540-amino-acid chain; its full sequence is Tyrosine-protein kinase transforming protein erbB (540 aa).

Residues 132–399 (FKKVKVLGFG…KMARDPPRYL (268 aa)) enclose the Protein kinase domain. Residues 138 to 146 (LGFGAFGTV) and Lys165 each bind ATP. Asp257 functions as the Proton acceptor in the catalytic mechanism.

This sequence belongs to the protein kinase superfamily. Tyr protein kinase family. EGF receptor subfamily.

It carries out the reaction L-tyrosyl-[protein] + ATP = O-phospho-L-tyrosyl-[protein] + ADP + H(+). The polypeptide is Tyrosine-protein kinase transforming protein erbB (V-ERBB) (Avian erythroblastosis virus (strain ts167)).